Here is a 504-residue protein sequence, read N- to C-terminus: Kinesin light chain 3 (504 aa).

Residues Ala90–Leu150 adopt a coiled-coil conformation. Residues Leu153–Gln197 form a disordered region. The span at Pro158–Ser167 shows a compositional bias: low complexity. Position 173 is a phosphoserine (Ser173). 5 TPR repeats span residues Leu207–Ser240, Ala249–Thr282, Ala291–Val324, Ala333–Leu366, and Ala375–Pro408. Positions Leu411 to Ser438 are disordered. Ser466 carries the phosphoserine modification. Positions Val472–His504 are disordered. Residues Leu494–His504 show a composition bias toward polar residues. Position 498 is a phosphothreonine (Thr498). A Phosphoserine modification is found at Ser502.

Belongs to the kinesin light chain family. In terms of assembly, oligomer composed of two heavy chains and two light chains. Associates with microtubulin in an ATP-dependent manner. Interacts with KIF5C. Interacts with ODF1. Interacts with LRGUK. Interacts with VDAC2.

The protein localises to the cytoplasm. It is found in the cytoskeleton. The protein resides in the mitochondrion. Functionally, kinesin is a microtubule-associated force-producing protein that may play a role in organelle transport. Plays a role during spermiogenesis in the development of the sperm tail midpiece and in the normal function of spermatozoa. May play a role in the formation of the mitochondrial sheath formation in the developing spermatid midpiece. The chain is Kinesin light chain 3 (KLC3) from Homo sapiens (Human).